Reading from the N-terminus, the 220-residue chain is Large ribosomal subunit protein uL4 (220 aa).

Residues alanine 45–arginine 102 form a disordered region. A compositionally biased stretch (basic residues) spans glycine 62–glycine 73.

It belongs to the universal ribosomal protein uL4 family. In terms of assembly, part of the 50S ribosomal subunit.

Functionally, one of the primary rRNA binding proteins, this protein initially binds near the 5'-end of the 23S rRNA. It is important during the early stages of 50S assembly. It makes multiple contacts with different domains of the 23S rRNA in the assembled 50S subunit and ribosome. In terms of biological role, forms part of the polypeptide exit tunnel. The chain is Large ribosomal subunit protein uL4 from Corynebacterium aurimucosum (strain ATCC 700975 / DSM 44827 / CIP 107346 / CN-1) (Corynebacterium nigricans).